We begin with the raw amino-acid sequence, 143 residues long: Phosphoribosyl-AMP cyclohydrolase (143 aa).

Asp86 lines the Mg(2+) pocket. A Zn(2+)-binding site is contributed by Cys87. Mg(2+) contacts are provided by Asp88 and Asp90. The Zn(2+) site is built by Cys103 and Cys110.

Belongs to the PRA-CH family. As to quaternary structure, homodimer. Mg(2+) serves as cofactor. It depends on Zn(2+) as a cofactor.

Its subcellular location is the cytoplasm. It carries out the reaction 1-(5-phospho-beta-D-ribosyl)-5'-AMP + H2O = 1-(5-phospho-beta-D-ribosyl)-5-[(5-phospho-beta-D-ribosylamino)methylideneamino]imidazole-4-carboxamide. The protein operates within amino-acid biosynthesis; L-histidine biosynthesis; L-histidine from 5-phospho-alpha-D-ribose 1-diphosphate: step 3/9. Its function is as follows. Catalyzes the hydrolysis of the adenine ring of phosphoribosyl-AMP. In Rhodospirillum rubrum (strain ATCC 11170 / ATH 1.1.1 / DSM 467 / LMG 4362 / NCIMB 8255 / S1), this protein is Phosphoribosyl-AMP cyclohydrolase.